The primary structure comprises 336 residues: Aspartate--ammonia ligase (336 aa).

This sequence belongs to the class-II aminoacyl-tRNA synthetase family. AsnA subfamily.

Its subcellular location is the cytoplasm. It catalyses the reaction L-aspartate + NH4(+) + ATP = L-asparagine + AMP + diphosphate + H(+). It functions in the pathway amino-acid biosynthesis; L-asparagine biosynthesis; L-asparagine from L-aspartate (ammonia route): step 1/1. This chain is Aspartate--ammonia ligase, found in Lactobacillus johnsonii (strain CNCM I-12250 / La1 / NCC 533).